Consider the following 510-residue polypeptide: Maturase K (510 aa).

It belongs to the intron maturase 2 family. MatK subfamily.

It localises to the plastid. The protein resides in the chloroplast. Its function is as follows. Usually encoded in the trnK tRNA gene intron. Probably assists in splicing its own and other chloroplast group II introns. In Populus trichocarpa (Western balsam poplar), this protein is Maturase K.